The chain runs to 738 residues: 1,4-alpha-glucan branching enzyme GlgB (738 aa).

The active-site Nucleophile is Asp-417. Glu-472 acts as the Proton donor in catalysis.

This sequence belongs to the glycosyl hydrolase 13 family. GlgB subfamily. In terms of assembly, monomer.

The catalysed reaction is Transfers a segment of a (1-&gt;4)-alpha-D-glucan chain to a primary hydroxy group in a similar glucan chain.. It participates in glycan biosynthesis; glycogen biosynthesis. Catalyzes the formation of the alpha-1,6-glucosidic linkages in glycogen by scission of a 1,4-alpha-linked oligosaccharide from growing alpha-1,4-glucan chains and the subsequent attachment of the oligosaccharide to the alpha-1,6 position. This is 1,4-alpha-glucan branching enzyme GlgB from Burkholderia pseudomallei (strain 668).